We begin with the raw amino-acid sequence, 65 residues long: uncharacterized protein (65 aa).

This is an uncharacterized protein from Dictyostelium discoideum (Social amoeba).